The chain runs to 358 residues: Heavy metal-associated isoprenylated plant protein 37 (358 aa).

One can recognise an HMA domain in the interval 12–75 (IQTFSLRVNI…KLVKAGKHAE (64 aa)). A metal cation is bound by residues Cys23 and Cys26. Disordered stretches follow at residues 100 to 194 (QKGQ…QNTQ) and 332 to 358 (QQQSSHSHATNMSSEEDAGNNNSCNIM). Residues 128 to 141 (AEEDGDGSEEEDGD) show a composition bias toward acidic residues. Residues 148–181 (ANQQQQQNVVNAKKNSGGAAMNNGNNGVNAASKK) show a composition bias toward low complexity. 2 stretches are compositionally biased toward polar residues: residues 184–194 (QKQSNHNQNTQ) and 339–358 (HATNMSSEEDAGNNNSCNIM). Residue Cys355 is modified to Cysteine methyl ester. Cys355 carries the S-farnesyl cysteine lipid modification. Positions 356–358 (NIM) are cleaved as a propeptide — removed in mature form.

It belongs to the HIPP family.

Heavy-metal-binding protein. The chain is Heavy metal-associated isoprenylated plant protein 37 from Arabidopsis thaliana (Mouse-ear cress).